A 316-amino-acid polypeptide reads, in one-letter code: Transaldolase 1 (316 aa).

K131 (schiff-base intermediate with substrate) is an active-site residue.

This sequence belongs to the transaldolase family. Type 1 subfamily. In terms of assembly, homodimer.

It localises to the cytoplasm. The catalysed reaction is D-sedoheptulose 7-phosphate + D-glyceraldehyde 3-phosphate = D-erythrose 4-phosphate + beta-D-fructose 6-phosphate. It functions in the pathway carbohydrate degradation; pentose phosphate pathway; D-glyceraldehyde 3-phosphate and beta-D-fructose 6-phosphate from D-ribose 5-phosphate and D-xylulose 5-phosphate (non-oxidative stage): step 2/3. Its function is as follows. Transaldolase is important for the balance of metabolites in the pentose-phosphate pathway. This chain is Transaldolase 1, found in Pectobacterium atrosepticum (strain SCRI 1043 / ATCC BAA-672) (Erwinia carotovora subsp. atroseptica).